A 170-amino-acid polypeptide reads, in one-letter code: RxLR effector protein CRE16 (170 aa).

The first 23 residues, 1–23 (MSKLFYAFAVLAVHVLTSSPTTA), serve as a signal peptide directing secretion. The short motif at 47 to 68 (RFLRSIHEGEDSLKPSAFSEER) is the RxLR-dEER element.

Belongs to the RxLR effector family.

Its subcellular location is the secreted. The protein localises to the host cytoplasm. It localises to the host nucleus. In terms of biological role, effector that is involved in host plant infection. Contributes to virulence during the early infection stage, by inhibiting plant defense responses induced by both PAMP-triggered immunity (PTI) and effector-triggered immunity (ETI). This chain is RxLR effector protein CRE16, found in Phytophthora infestans (strain T30-4) (Potato late blight agent).